A 494-amino-acid chain; its full sequence is Aspartyl/glutamyl-tRNA(Asn/Gln) amidotransferase subunit B (494 aa).

This sequence belongs to the GatB/GatE family. GatB subfamily. As to quaternary structure, heterotrimer of A, B and C subunits.

It catalyses the reaction L-glutamyl-tRNA(Gln) + L-glutamine + ATP + H2O = L-glutaminyl-tRNA(Gln) + L-glutamate + ADP + phosphate + H(+). The catalysed reaction is L-aspartyl-tRNA(Asn) + L-glutamine + ATP + H2O = L-asparaginyl-tRNA(Asn) + L-glutamate + ADP + phosphate + 2 H(+). Allows the formation of correctly charged Asn-tRNA(Asn) or Gln-tRNA(Gln) through the transamidation of misacylated Asp-tRNA(Asn) or Glu-tRNA(Gln) in organisms which lack either or both of asparaginyl-tRNA or glutaminyl-tRNA synthetases. The reaction takes place in the presence of glutamine and ATP through an activated phospho-Asp-tRNA(Asn) or phospho-Glu-tRNA(Gln). This Rhodopseudomonas palustris (strain HaA2) protein is Aspartyl/glutamyl-tRNA(Asn/Gln) amidotransferase subunit B.